Reading from the N-terminus, the 804-residue chain is uncharacterized protein (804 aa).

This is an uncharacterized protein from Methanothermobacter marburgensis (strain ATCC BAA-927 / DSM 2133 / JCM 14651 / NBRC 100331 / OCM 82 / Marburg) (Methanobacterium thermoautotrophicum).